Reading from the N-terminus, the 123-residue chain is Protein Wnt-7b (123 aa).

A lipid anchor (O-palmitoleoyl serine; by PORCN) is attached at Ser1. The disordered linker stretch occupies residues Val33 to Thr61. Cysteines 89 and 104 form a disulfide. Asn90 is a glycosylation site (N-linked (GlcNAc...) asparagine).

The protein belongs to the Wnt family. Palmitoleoylation is required for efficient binding to frizzled receptors. Depalmitoleoylation leads to Wnt signaling pathway inhibition.

Its subcellular location is the secreted. The protein resides in the extracellular space. The protein localises to the extracellular matrix. In terms of biological role, ligand for members of the frizzled family of seven transmembrane receptors that functions in the canonical Wnt/beta-catenin signaling pathway. Required for normal fusion of the chorion and the allantois during placenta development. Required for central nervous system (CNS) angiogenesis and blood-brain barrier regulation. In Sceloporus occidentalis (Western fence lizard), this protein is Protein Wnt-7b (WNT-7B).